The sequence spans 344 residues: GDSL esterase/lipase At5g03590 (344 aa).

The N-terminal stretch at 1–19 (MHYLMKLFFSLSLFFGING) is a signal peptide. The active-site Nucleophile is the Ser-41. Residues Asn-126, Asn-227, and Asn-238 are each glycosylated (N-linked (GlcNAc...) asparagine). Asp-318 is an active-site residue.

It belongs to the 'GDSL' lipolytic enzyme family.

It is found in the secreted. The sequence is that of GDSL esterase/lipase At5g03590 from Arabidopsis thaliana (Mouse-ear cress).